The chain runs to 314 residues: 4-hydroxy-3-methylbut-2-enyl diphosphate reductase (314 aa).

A [4Fe-4S] cluster-binding site is contributed by Cys12. (2E)-4-hydroxy-3-methylbut-2-enyl diphosphate-binding residues include His41 and His74. Residues His41 and His74 each coordinate dimethylallyl diphosphate. His41 and His74 together coordinate isopentenyl diphosphate. A [4Fe-4S] cluster-binding site is contributed by Cys96. His124 contributes to the (2E)-4-hydroxy-3-methylbut-2-enyl diphosphate binding site. His124 is a binding site for dimethylallyl diphosphate. His124 serves as a coordination point for isopentenyl diphosphate. Catalysis depends on Glu126, which acts as the Proton donor. Thr167 serves as a coordination point for (2E)-4-hydroxy-3-methylbut-2-enyl diphosphate. Cys197 provides a ligand contact to [4Fe-4S] cluster. (2E)-4-hydroxy-3-methylbut-2-enyl diphosphate-binding residues include Ser225, Ser226, Asn227, and Ser269. Dimethylallyl diphosphate is bound by residues Ser225, Ser226, Asn227, and Ser269. Isopentenyl diphosphate is bound by residues Ser225, Ser226, Asn227, and Ser269.

The protein belongs to the IspH family. It depends on [4Fe-4S] cluster as a cofactor.

It carries out the reaction isopentenyl diphosphate + 2 oxidized [2Fe-2S]-[ferredoxin] + H2O = (2E)-4-hydroxy-3-methylbut-2-enyl diphosphate + 2 reduced [2Fe-2S]-[ferredoxin] + 2 H(+). The catalysed reaction is dimethylallyl diphosphate + 2 oxidized [2Fe-2S]-[ferredoxin] + H2O = (2E)-4-hydroxy-3-methylbut-2-enyl diphosphate + 2 reduced [2Fe-2S]-[ferredoxin] + 2 H(+). The protein operates within isoprenoid biosynthesis; dimethylallyl diphosphate biosynthesis; dimethylallyl diphosphate from (2E)-4-hydroxy-3-methylbutenyl diphosphate: step 1/1. Its pathway is isoprenoid biosynthesis; isopentenyl diphosphate biosynthesis via DXP pathway; isopentenyl diphosphate from 1-deoxy-D-xylulose 5-phosphate: step 6/6. Functionally, catalyzes the conversion of 1-hydroxy-2-methyl-2-(E)-butenyl 4-diphosphate (HMBPP) into a mixture of isopentenyl diphosphate (IPP) and dimethylallyl diphosphate (DMAPP). Acts in the terminal step of the DOXP/MEP pathway for isoprenoid precursor biosynthesis. The chain is 4-hydroxy-3-methylbut-2-enyl diphosphate reductase from Haemophilus influenzae (strain PittGG).